Consider the following 276-residue polypeptide: ATP synthase subunit a (276 aa).

7 consecutive transmembrane segments (helical) span residues 49-69 (KPML…FAAA), 109-129 (YLFT…IPFI), 137-157 (SGMV…AGIS), 173-193 (GIRG…NILV), 203-223 (FANM…GEYI), 232-252 (APVG…EMLI), and 253-273 (QFLQ…GAVA).

Belongs to the ATPase A chain family. As to quaternary structure, F-type ATPases have 2 components, CF(1) - the catalytic core - and CF(0) - the membrane proton channel. CF(1) has five subunits: alpha(3), beta(3), gamma(1), delta(1), epsilon(1). CF(0) has three main subunits: a(1), b(2) and c(9-12). The alpha and beta chains form an alternating ring which encloses part of the gamma chain. CF(1) is attached to CF(0) by a central stalk formed by the gamma and epsilon chains, while a peripheral stalk is formed by the delta and b chains.

Its subcellular location is the cell membrane. Its function is as follows. Key component of the proton channel; it plays a direct role in the translocation of protons across the membrane. The protein is ATP synthase subunit a of Nocardioides sp. (strain ATCC BAA-499 / JS614).